We begin with the raw amino-acid sequence, 481 residues long: Halobacterial transducer protein 9 (481 aa).

The region spanning 10-81 is the PAS domain; the sequence is SPFTVPLLLN…NKVADTPIDA (72 aa). The 237-residue stretch at 208 to 444 folds into the Methyl-accepting transducer domain; that stretch reads DVERLEAASQ…EIAAMVDETA (237 aa).

It belongs to the methyl-accepting chemotaxis (MCP) protein family.

Its subcellular location is the cytoplasm. Potentially involved in chemo- or phototactic signal transduction. The sequence is that of Halobacterial transducer protein 9 (htr9) from Halobacterium salinarum (strain ATCC 700922 / JCM 11081 / NRC-1) (Halobacterium halobium).